Here is a 308-residue protein sequence, read N- to C-terminus: Acetylglutamate kinase (308 aa).

Substrate contacts are provided by residues 86-87 (GG), Arg108, and Asn201.

It belongs to the acetylglutamate kinase family. ArgB subfamily.

It is found in the cytoplasm. It catalyses the reaction N-acetyl-L-glutamate + ATP = N-acetyl-L-glutamyl 5-phosphate + ADP. It functions in the pathway amino-acid biosynthesis; L-arginine biosynthesis; N(2)-acetyl-L-ornithine from L-glutamate: step 2/4. Functionally, catalyzes the ATP-dependent phosphorylation of N-acetyl-L-glutamate. In Prochlorococcus marinus (strain MIT 9303), this protein is Acetylglutamate kinase.